Here is a 473-residue protein sequence, read N- to C-terminus: Photosystem II CP43 reaction center protein (473 aa).

A propeptide spanning residues 1–14 (MKTLYSLRRFYHVE) is cleaved from the precursor. An N-acetylthreonine modification is found at T15. T15 is modified (phosphothreonine). A run of 5 helical transmembrane segments spans residues 69-93 (LFEV…PHLA), 134-155 (LLGP…KDRN), 178-200 (KALY…RKIT), 255-275 (KPFA…LSYS), and 291-312 (CFNN…ASQA). E367 provides a ligand contact to [CaMn4O5] cluster. Residues 447-471 (RARAAAAGFEKGIDRDFEPVLSMTP) form a helical membrane-spanning segment.

This sequence belongs to the PsbB/PsbC family. PsbC subfamily. In terms of assembly, PSII is composed of 1 copy each of membrane proteins PsbA, PsbB, PsbC, PsbD, PsbE, PsbF, PsbH, PsbI, PsbJ, PsbK, PsbL, PsbM, PsbT, PsbX, PsbY, PsbZ, Psb30/Ycf12, at least 3 peripheral proteins of the oxygen-evolving complex and a large number of cofactors. It forms dimeric complexes. It depends on Binds multiple chlorophylls and provides some of the ligands for the Ca-4Mn-5O cluster of the oxygen-evolving complex. It may also provide a ligand for a Cl- that is required for oxygen evolution. PSII binds additional chlorophylls, carotenoids and specific lipids. as a cofactor.

The protein localises to the plastid. It localises to the chloroplast thylakoid membrane. In terms of biological role, one of the components of the core complex of photosystem II (PSII). It binds chlorophyll and helps catalyze the primary light-induced photochemical processes of PSII. PSII is a light-driven water:plastoquinone oxidoreductase, using light energy to abstract electrons from H(2)O, generating O(2) and a proton gradient subsequently used for ATP formation. In Jasminum nudiflorum (Winter jasmine), this protein is Photosystem II CP43 reaction center protein.